Reading from the N-terminus, the 81-residue chain is MLVLTRKVGESIRISDDIVVKVIDIGKNRIRIGIDAPSTVSVLRNEVYEEIHQENILSSRGSVTDLAKAATLWARKSKKEE.

Belongs to the CsrA/RsmA family. In terms of assembly, homodimer; the beta-strands of each monomer intercalate to form a hydrophobic core, while the alpha-helices form wings that extend away from the core.

It is found in the cytoplasm. A translational regulator that binds mRNA to regulate translation initiation and/or mRNA stability. Usually binds in the 5'-UTR at or near the Shine-Dalgarno sequence preventing ribosome-binding, thus repressing translation. Its main target seems to be the major flagellin gene, while its function is anatagonized by FliW. In Desulforapulum autotrophicum (strain ATCC 43914 / DSM 3382 / VKM B-1955 / HRM2) (Desulfobacterium autotrophicum), this protein is Translational regulator CsrA.